The primary structure comprises 159 residues: MAERPGPPGGAVSATAYPDTPAEFPPHLQAGAMRRRFWGVFNCLCAGSFGALAAASAKLAFGSEVSMGLCVLGIIVMASTNSLMWTFFSRGLSFSMSSAIASVTVTFSNILSSAFLGYVLYGECQEVLWWGGVFLILCGLTLIHRKLPPTWKPLPHKQQ.

4 consecutive transmembrane segments (helical) span residues 37–57 (FWGV…AASA), 59–79 (LAFG…VMAS), 100–120 (IASV…GYVL), and 124–144 (CQEV…TLIH).

It localises to the membrane. The polypeptide is Transmembrane protein 42 (TMEM42) (Pongo abelii (Sumatran orangutan)).